A 613-amino-acid chain; its full sequence is Laccase 1 (613 aa).

Residues 1 to 20 form the signal peptide; sequence MSRFARLLLIVALFFTNAWA. Plastocyanin-like domains lie at 29 to 142 and 171 to 359; these read ITWK…IRPK and YLVV…MRIP. Residue Asn74 is glycosylated (N-linked (GlcNAc...) asparagine). Cu cation contacts are provided by His78, His80, His122, and His124. Asn256, Asn279, Asn444, Asn468, and Asn484 each carry an N-linked (GlcNAc...) asparagine glycan. Residues 468–598 form the Plastocyanin-like 3 domain; that stretch reads NATRDTENDG…GGMGIAILDG (131 aa). Cu cation is bound by residues His506, His509, and His511. Residue Asn526 is glycosylated (N-linked (GlcNAc...) asparagine). Cu cation-binding residues include His580, Cys581, His582, and His586.

Belongs to the multicopper oxidase family. The cofactor is Cu cation.

The protein resides in the cell surface. It participates in pigment biosynthesis. In terms of biological role, laccase; part of the Pks1 gene cluster that mediates the biosynthesis of an anthraquinone derivative pigment that contributes to conidial pigmentation that provides protection from UV radiation, heat and cold stress. The polyketide synthase Pks1 produces 1-acetyl-2,4,6,8-tetrahydroxy-9,10-anthraquinone though condensation of acetyl-CoA with malonyl-CoA. The dehydratase EthD and the laccase Mlac1 further convert the anthraquinone derivative into the final conidial pigment. The sequence is that of Laccase 1 from Metarhizium robertsii (strain ARSEF 23 / ATCC MYA-3075) (Metarhizium anisopliae (strain ARSEF 23)).